Reading from the N-terminus, the 142-residue chain is MFAVIKTGGKQYRVAANDLIKVEKVAGEAGDIVEFAEVLMVGSTIGAPTVAGALVTAEVVEQSRGRKVIAFKKRRRQNSKRTRGHRQELTTIRISEILTDGAKPSKKAAEKKAPKADAAEGEAAKPKKAAPKKAAAKAESAE.

The segment covering 73-84 (KRRRQNSKRTRG) has biased composition (basic residues). A disordered region spans residues 73–142 (KRRRQNSKRT…KAAAKAESAE (70 aa)). Residues 107–125 (KAAEKKAPKADAAEGEAAK) show a composition bias toward basic and acidic residues. The span at 126–135 (PKKAAPKKAA) shows a compositional bias: basic residues.

This sequence belongs to the bacterial ribosomal protein bL21 family. In terms of assembly, part of the 50S ribosomal subunit. Contacts protein L20.

This protein binds to 23S rRNA in the presence of protein L20. The sequence is that of Large ribosomal subunit protein bL21 from Brucella canis (strain ATCC 23365 / NCTC 10854 / RM-666).